The primary structure comprises 647 residues: DNA ligase (647 aa).

NAD(+)-binding positions include 30–34 (DEEYD), 79–80 (SM), and Glu105. Lys107 serves as the catalytic N6-AMP-lysine intermediate. 3 residues coordinate NAD(+): Arg128, Glu162, and Lys301. Zn(2+) is bound by residues Cys395, Cys398, Cys411, and Cys416. A BRCT domain is found at 570–647 (KSDGVIFGKT…ESAFNELVKE (78 aa)).

It belongs to the NAD-dependent DNA ligase family. LigA subfamily. The cofactor is Mg(2+). Mn(2+) is required as a cofactor.

It carries out the reaction NAD(+) + (deoxyribonucleotide)n-3'-hydroxyl + 5'-phospho-(deoxyribonucleotide)m = (deoxyribonucleotide)n+m + AMP + beta-nicotinamide D-nucleotide.. Functionally, DNA ligase that catalyzes the formation of phosphodiester linkages between 5'-phosphoryl and 3'-hydroxyl groups in double-stranded DNA using NAD as a coenzyme and as the energy source for the reaction. It is essential for DNA replication and repair of damaged DNA. This chain is DNA ligase, found in Campylobacter jejuni subsp. jejuni serotype O:6 (strain 81116 / NCTC 11828).